Here is a 99-residue protein sequence, read N- to C-terminus: Small ribosomal subunit protein bS20 (99 aa).

This sequence belongs to the bacterial ribosomal protein bS20 family.

Functionally, binds directly to 16S ribosomal RNA. This Prochlorococcus marinus (strain SARG / CCMP1375 / SS120) protein is Small ribosomal subunit protein bS20.